The chain runs to 318 residues: ATP phosphoribosyltransferase regulatory subunit (318 aa).

This sequence belongs to the class-II aminoacyl-tRNA synthetase family. HisZ subfamily. Heteromultimer composed of HisG and HisZ subunits.

The protein localises to the cytoplasm. It functions in the pathway amino-acid biosynthesis; L-histidine biosynthesis; L-histidine from 5-phospho-alpha-D-ribose 1-diphosphate: step 1/9. In terms of biological role, required for the first step of histidine biosynthesis. May allow the feedback regulation of ATP phosphoribosyltransferase activity by histidine. The polypeptide is ATP phosphoribosyltransferase regulatory subunit (Lactococcus lactis subsp. cremoris (strain MG1363)).